The following is a 1658-amino-acid chain: Collagen alpha-1(XXVII) chain B (1658 aa).

Residues 1-38 form the signal peptide; that stretch reads MEPDNTPSSRLRAAGVGGRAVFFCMVLYCTCCLRLAQA. Positions 66-229 constitute a Laminin G-like domain; that stretch reads GVILTTRARI…NYCKYIKKQC (164 aa). Over residues 308 to 323 the composition is skewed to polar residues; that stretch reads SIRNRTSQISPKPTQQ. Disordered stretches follow at residues 308–332, 345–364, 427–550, 571–614, 637–1332, and 1377–1415; these read SIRN…KKER, VTDS…TTTT, GLKG…GNMG, GERG…APGP, GPKG…DAGE, and IIGP…GPPG. The tract at residues 424–1417 is triple-helical region; the sequence is ELTGLKGEPG…RGPPGPPGLP (994 aa). Collagen-like domains lie at 425–478, 493–552, 556–615, 622–681, 685–744, 748–807, and 811–870; these read LTGL…GNPG, GLVG…MGPK, GFIG…PGPV, GDMG…PGLP, GKPG…PGLE, GPVG…MGLA, and GDRG…RGPD. Over residues 434–444 the composition is skewed to pro residues; sequence LPGPPGPPGQP. Residues 491-506 are compositionally biased toward low complexity; it reads DPGLVGLPGQPGQPGR. 2 stretches are compositionally biased toward low complexity: residues 657 to 666 and 678 to 692; these read LGLPGEPGEP and PGLP…PQGK. Residues 733–742 show a composition bias toward gly residues; the sequence is GIPGPGGLPG. 2 stretches are compositionally biased toward low complexity: residues 837–852 and 875–890; these read RGLS…HGSR and EKGM…PPGK. 8 consecutive Collagen-like domains span residues 892–951, 952–1011, 1024–1083, 1084–1137, 1139–1198, 1199–1258, 1268–1327, and 1361–1420; these read GLSG…IGLP, GKAG…VGLE, GTEG…IGPK, GSRG…DGKV, GPPG…KGSK, GNKG…PGDL, GKPG…KGQP, and GPQG…PAVA. Positions 1040 to 1058 are enriched in basic and acidic residues; that stretch reads PEGKPGKIGERGKPGEKGS. Residues 1112–1124 are compositionally biased toward low complexity; that stretch reads HQGPQGSLGSPGP. Residues 1125–1137 are compositionally biased toward basic and acidic residues; it reads KGEKGEQGDDGKV. Positions 1215 to 1230 are enriched in low complexity; that stretch reads NRGSPGPVGVPGPRGV. Positions 1307-1316 are enriched in gly residues; sequence GLNGGMGFPG. Residues 1402 to 1415 are compositionally biased toward pro residues; sequence RGPPGPRGPPGPPG. Residues 1421–1658 constitute a propeptide, C-terminal propeptide; sequence FSHENEALGA…HLEVGPVCFL (238 aa). One can recognise a Fibrillar collagen NC1 domain in the interval 1458 to 1658; it reads SEIFKTLHYL…HLEVGPVCFL (201 aa). Intrachain disulfides connect Cys1488–Cys1520, Cys1529–Cys1656, and Cys1565–Cys1609. Ca(2+)-binding residues include Asp1506, Asn1508, Cys1511, and Asp1514. N-linked (GlcNAc...) asparagine glycosylation is present at Asn1567.

The protein belongs to the fibrillar collagen family. Weakly expressed in the notochord from the 6 somite stage. Expressed throughout the notochord at 13 somites, then becomes restricted to the distal tip of the notochord by 24 hpf. Also expressed in head cartilages by 48 hpf.

The protein resides in the secreted. Its subcellular location is the extracellular space. It is found in the extracellular matrix. Functionally, may play a role during the calcification of cartilage and the transition of cartilage to bone. Together with col27a1a, plays a role in development of the notochord and axial skeleton. The protein is Collagen alpha-1(XXVII) chain B (col27a1b) of Danio rerio (Zebrafish).